The following is a 442-amino-acid chain: tRNA-2-methylthio-N(6)-dimethylallyladenosine synthase (442 aa).

Residues 2-120 (KKVFIRTFGC…LPKMIVDKET (119 aa)) form the MTTase N-terminal domain. Residues Cys11, Cys49, Cys83, Cys157, Cys161, and Cys164 each contribute to the [4Fe-4S] cluster site. The 233-residue stretch at 143 to 375 (RVEGGAAFVS…NEVIEAETAR (233 aa)) folds into the Radical SAM core domain. Residues 378–441 (QTMIGTVQRC…TFSLRGKIVE (64 aa)) enclose the TRAM domain.

The protein belongs to the methylthiotransferase family. MiaB subfamily. In terms of assembly, monomer. Requires [4Fe-4S] cluster as cofactor.

The protein localises to the cytoplasm. The catalysed reaction is N(6)-dimethylallyladenosine(37) in tRNA + (sulfur carrier)-SH + AH2 + 2 S-adenosyl-L-methionine = 2-methylsulfanyl-N(6)-dimethylallyladenosine(37) in tRNA + (sulfur carrier)-H + 5'-deoxyadenosine + L-methionine + A + S-adenosyl-L-homocysteine + 2 H(+). Catalyzes the methylthiolation of N6-(dimethylallyl)adenosine (i(6)A), leading to the formation of 2-methylthio-N6-(dimethylallyl)adenosine (ms(2)i(6)A) at position 37 in tRNAs that read codons beginning with uridine. This Neisseria gonorrhoeae (strain NCCP11945) protein is tRNA-2-methylthio-N(6)-dimethylallyladenosine synthase.